The sequence spans 369 residues: D-alanine--D-alanine ligase (369 aa).

One can recognise an ATP-grasp domain in the interval 152 to 359; it reads KKLFAAEGLP…YPSLLATMVE (208 aa). 180-235 provides a ligand contact to ATP; that stretch reads RERLGLPVFVKPARGGSSIGVSRVSSWDELDAAVAAARDHDPKVIVEAAIAGRELE. Positions 314, 326, and 328 each coordinate Mg(2+).

The protein belongs to the D-alanine--D-alanine ligase family. The cofactor is Mg(2+). Mn(2+) is required as a cofactor.

Its subcellular location is the cytoplasm. The catalysed reaction is 2 D-alanine + ATP = D-alanyl-D-alanine + ADP + phosphate + H(+). It participates in cell wall biogenesis; peptidoglycan biosynthesis. Functionally, cell wall formation. The polypeptide is D-alanine--D-alanine ligase (Mycolicibacterium paratuberculosis (strain ATCC BAA-968 / K-10) (Mycobacterium paratuberculosis)).